The chain runs to 902 residues: 4-hydroxyphenylacetate decarboxylase glycyl radical subunit (902 aa).

The PFL domain occupies 38-774 (KRAEDLLDVY…ATLATPDGRL (737 aa)). S348 and C507 together coordinate 4-hydroxyphenylacetate. The active-site Cysteine radical intermediate is C507. Catalysis depends on E509, which acts as the Proton donor. 4-hydroxyphenylacetate-binding residues include H540 and E641. The Glycine radical domain maps to 782–902 (GSVSAYAGTD…VIARTEYEGV (121 aa)). G877 carries the post-translational modification Glycine radical.

Belongs to the glycyl radical enzyme (GRE) family. HPAD subfamily. In terms of assembly, heterooctamer consisting of 4 large (HpdB) subunits and 4 small (HpdC) subunits, arranged as a tetramer of heterodimers. Also forms a catalytically inactive homodimer. Requires the activating protein CsdA to generate the key active site glycyl radical that is involved in catalysis. In terms of processing, phosphorylated on serine. Phosphorylation may trigger the formation of the active heterooctamers and thereby regulates enzyme activity.

The catalysed reaction is 4-hydroxyphenylacetate + H(+) = 4-methylphenol + CO2. It carries out the reaction 3,4-dihydroxyphenylacetate + H(+) = 4-methylcatechol + CO2. Functionally, glycyl radical subunit of the HPA decarboxylase that decarboxylates phenylacetates with a hydroxyl group in the p-position. Active toward 4-hydroxyphenylacetate and 3,4-dihydroxyphenylacetate, forming 4-methylphenol and 4-methylcatechol, respectively. Is likely involved in the catabolism of aromatic amino acids such as tyrosine fermentation. 4-methylphenol (p-cresol) formation provides metabolic toxicity, which allows an active suppression of other microbes and may provide growth advantages for the producers in highly competitive environments. The large subunit is the catalytic subunit that binds the substrate. This is 4-hydroxyphenylacetate decarboxylase glycyl radical subunit from Clostridioides difficile (strain CD196) (Peptoclostridium difficile).